We begin with the raw amino-acid sequence, 150 residues long: Arginine repressor (150 aa).

Belongs to the ArgR family.

The protein localises to the cytoplasm. The protein operates within amino-acid biosynthesis; L-arginine biosynthesis [regulation]. Functionally, regulates arginine biosynthesis genes. The polypeptide is Arginine repressor (Staphylococcus haemolyticus (strain JCSC1435)).